A 327-amino-acid chain; its full sequence is GMP reductase (327 aa).

The Thioimidate intermediate role is filled by Cys-176. Residue 205–228 (IIADGGIRTHGDIAKSIRFGASMV) coordinates NADP(+).

The protein belongs to the IMPDH/GMPR family. GuaC type 2 subfamily.

The enzyme catalyses IMP + NH4(+) + NADP(+) = GMP + NADPH + 2 H(+). In terms of biological role, catalyzes the irreversible NADPH-dependent deamination of GMP to IMP. It functions in the conversion of nucleobase, nucleoside and nucleotide derivatives of G to A nucleotides, and in maintaining the intracellular balance of A and G nucleotides. The chain is GMP reductase from Streptococcus agalactiae serotype Ia (strain ATCC 27591 / A909 / CDC SS700).